The following is a 403-amino-acid chain: Phosphopentomutase (403 aa).

The Mn(2+) site is built by Asp13, Asp298, His303, Asp339, His340, and His351.

The protein belongs to the phosphopentomutase family. Mn(2+) serves as cofactor.

The protein localises to the cytoplasm. It catalyses the reaction 2-deoxy-alpha-D-ribose 1-phosphate = 2-deoxy-D-ribose 5-phosphate. The catalysed reaction is alpha-D-ribose 1-phosphate = D-ribose 5-phosphate. It functions in the pathway carbohydrate degradation; 2-deoxy-D-ribose 1-phosphate degradation; D-glyceraldehyde 3-phosphate and acetaldehyde from 2-deoxy-alpha-D-ribose 1-phosphate: step 1/2. Functionally, isomerase that catalyzes the conversion of deoxy-ribose 1-phosphate (dRib-1-P) and ribose 1-phosphate (Rib-1-P) to deoxy-ribose 5-phosphate (dRib-5-P) and ribose 5-phosphate (Rib-5-P), respectively. The protein is Phosphopentomutase of Streptococcus thermophilus.